A 355-amino-acid polypeptide reads, in one-letter code: MASSSSNRQFSHRNANTFLTYPKCPENPEIACQMIWELVVRWIPKYILCAREAHKDGSLHLHALLQTEKPVRISDSRFFDINGFHPNIQSAKSVNRVRDYILKEPLAVFERGTFIPRKSPFLGKSDSEVKEKKPSKDEIMRDIISHATSKAEYLSMIQKELPFDWSTKLQYFEYSANKLFPEIQEEFTNPHPPSSPDLLCNESINDWLQPNIFQSSDERSRKQSLYIVGPTRTGKSTWARSLGVHNYWQNNVDWSSYNEDAIYNIVDDIPFKFCPCWKQLVGCQRDFIVNPKYGKKKKVQKKSKPTIILANSDEDWMKEMTPGQLEYFEANCIIYIMSPGEKWYSPPVLPPTEEV.

Positions 11 to 114 (SHRNANTFLT…PLAVFERGTF (104 aa)) constitute a CRESS-DNA virus Rep endonuclease domain. Positions 18 to 21 (FLTY) match the RCR-1 motif. A divalent metal cation is bound by residues Glu-52, His-60, and His-62. Positions 60-62 (HLH) match the RCR-2 motif. The For DNA cleavage activity role is filled by Tyr-100. Positions 100–103 (YILK) match the RCR-3 motif. Glu-104 serves as a coordination point for a divalent metal cation. Residues 175–187 (SANKLFPEIQEEF) form an oligomerization region. 229 to 236 (GPTRTGKS) is an ATP binding site. The transactivation stretch occupies residues 252–270 (VDWSSYNEDAIYNIVDDIP). A Nuclear localization signal motif is present at residues 292 to 303 (KYGKKKKVQKKS).

The protein belongs to the geminiviridae Rep protein family. Homooligomer. Rep binds to repeated DNA motifs (iterons). Forms the O-complex, which is a Rep-DNA complex involved in the initiation of RCR. Part of the C- and V-complexes which are RepA-Rep-DNA complexes involved in the c-sense and v-sense transcription. It depends on Mg(2+) as a cofactor. Mn(2+) serves as cofactor.

The protein localises to the host nucleus. Essential for the replication of viral ssDNA. The closed circular ssDNA genome is first converted to a superhelical dsDNA. Rep binds a specific region at the genome origin of replication. It introduces an endonucleolytic nick within the conserved sequence 5'-TAATATTAC-3' in the intergenic region of the genome present in all geminiviruses, thereby initiating the rolling circle replication (RCR). Following cleavage, binds covalently to the 5'-phosphate of DNA as a tyrosyl ester. The cleavage gives rise to a free 3'-OH that serves as a primer for the cellular DNA polymerase. The polymerase synthesizes the (+) strand DNA by rolling circle mechanism. After one round of replication, a Rep-catalyzed nucleotidyl transfer reaction releases a circular single-stranded virus genome, thereby terminating the replication. Displays origin-specific DNA cleavage, nucleotidyl transferase, ATPase and helicase activities. Acts as an inhibitor of C-sense gene transcription. This is Replication-associated protein from Maize streak virus genotype A (isolate South Africa) (MSV).